Consider the following 175-residue polypeptide: Urease accessory protein UreE (175 aa).

A disordered region spans residues 134 to 175 (FQPESGAYGGGHHHGDESATDLHNPGHGPHRSVPKIHEFKPR).

It belongs to the UreE family.

It is found in the cytoplasm. Involved in urease metallocenter assembly. Binds nickel. Probably functions as a nickel donor during metallocenter assembly. This is Urease accessory protein UreE from Dechloromonas aromatica (strain RCB).